Here is a 591-residue protein sequence, read N- to C-terminus: Guanylate-binding protein 2 (591 aa).

Positions 1-309 (MAPEINLPGP…NAISSGDLPC (309 aa)) are GTPase domain (Globular). Residues 35–276 (TQPVVVVAIV…FCSYILSHSN (242 aa)) enclose the GB1/RHD3-type G domain. GTP is bound by residues 45 to 52 (GLYRTGKS), 181 to 182 (RD), and L245. C588 carries the cysteine methyl ester modification. A lipid anchor (S-geranylgeranyl cysteine) is attached at C588. Residues 589 to 591 (NIL) constitute a propeptide, removed in mature form.

It belongs to the TRAFAC class dynamin-like GTPase superfamily. GB1/RHD3 GTPase family. GB1 subfamily. As to quaternary structure, homodimer; homodimerization occurs upon GTP-binding and is required for the association with membranous structures. Heterodimer with other family members, including GBP1, GBP3, GBP4 and GBP5. (Microbial infection) Ubiquitinated by S.flexneri IpaH9.8, leading to its degradation by the proteasome, thereby preventing its ability to promote host defense against bacterial infection. Post-translationally, isoprenylation is required for proper subcellular location.

It localises to the cytoplasmic vesicle membrane. The protein resides in the golgi apparatus membrane. It is found in the cytoplasm. Its subcellular location is the perinuclear region. It catalyses the reaction GTP + H2O = GDP + phosphate + H(+). Its function is as follows. Interferon (IFN)-inducible GTPase that plays important roles in innate immunity against a diverse range of bacterial, viral and protozoan pathogens. Hydrolyzes GTP to GMP in 2 consecutive cleavage reactions, but the major reaction product is GDP. Following infection, recruited to the pathogen-containing vacuoles or vacuole-escaped bacteria and acts as a positive regulator of inflammasome assembly by promoting the release of inflammasome ligands from bacteria. Acts by promoting lysis of pathogen-containing vacuoles, releasing pathogens into the cytosol. Following pathogen release in the cytosol, promotes recruitment of proteins that mediate bacterial cytolysis: this liberates ligands that are detected by inflammasomes, such as lipopolysaccharide (LPS) that activates the non-canonical CASP4/CASP11 inflammasome or double-stranded DNA (dsDNA) that activates the AIM2 inflammasome. Confers protection to the protozoan pathogen Toxoplasma gondii. Independently of its GTPase activity, acts as an inhibitor of various viruses infectivity, such as HIV-1, Zika and influenza A viruses, by inhibiting FURIN-mediated maturation of viral envelope proteins. The chain is Guanylate-binding protein 2 from Homo sapiens (Human).